A 276-amino-acid chain; its full sequence is Mitochondrial outer membrane protein porin of 34 kDa (276 aa).

Belongs to the eukaryotic mitochondrial porin (TC 1.B.8.1) family.

It localises to the mitochondrion outer membrane. Functionally, forms a channel through the cell membrane that allows diffusion of small hydrophilic molecules. The channel adopts an open conformation at low or zero membrane potential and a closed conformation at potentials above 30-40 mV. The open state has a weak anion selectivity whereas the closed state is cation-selective. This Solanum tuberosum (Potato) protein is Mitochondrial outer membrane protein porin of 34 kDa.